The following is a 458-amino-acid chain: Exodeoxyribonuclease 7 large subunit (458 aa).

The protein belongs to the XseA family. As to quaternary structure, heterooligomer composed of large and small subunits.

The protein localises to the cytoplasm. The catalysed reaction is Exonucleolytic cleavage in either 5'- to 3'- or 3'- to 5'-direction to yield nucleoside 5'-phosphates.. Its function is as follows. Bidirectionally degrades single-stranded DNA into large acid-insoluble oligonucleotides, which are then degraded further into small acid-soluble oligonucleotides. This Halalkalibacterium halodurans (strain ATCC BAA-125 / DSM 18197 / FERM 7344 / JCM 9153 / C-125) (Bacillus halodurans) protein is Exodeoxyribonuclease 7 large subunit.